We begin with the raw amino-acid sequence, 336 residues long: Ribose-phosphate pyrophosphokinase (336 aa).

Residues 43 to 45 (DQE) and 102 to 103 (RQ) contribute to the ATP site. Residues His-136 and Asp-178 each coordinate Mg(2+). Lys-201 is an active-site residue. Residues Arg-203, Asp-227, and 231 to 235 (DTAGT) contribute to the D-ribose 5-phosphate site.

It belongs to the ribose-phosphate pyrophosphokinase family. Class I subfamily. As to quaternary structure, homohexamer. It depends on Mg(2+) as a cofactor.

It localises to the cytoplasm. The enzyme catalyses D-ribose 5-phosphate + ATP = 5-phospho-alpha-D-ribose 1-diphosphate + AMP + H(+). It participates in metabolic intermediate biosynthesis; 5-phospho-alpha-D-ribose 1-diphosphate biosynthesis; 5-phospho-alpha-D-ribose 1-diphosphate from D-ribose 5-phosphate (route I): step 1/1. In terms of biological role, involved in the biosynthesis of the central metabolite phospho-alpha-D-ribosyl-1-pyrophosphate (PRPP) via the transfer of pyrophosphoryl group from ATP to 1-hydroxyl of ribose-5-phosphate (Rib-5-P). This Cereibacter sphaeroides (strain KD131 / KCTC 12085) (Rhodobacter sphaeroides) protein is Ribose-phosphate pyrophosphokinase.